The sequence spans 212 residues: External core antigen (212 aa).

An N-terminal signal peptide occupies residues 1-19 (MQLFHLCLIISCSCPTVQA). Positions 25-27 (GWL) are HBEAG. The disordered stretch occupies residues 165–212 (NAPILSTLPETTVVRRRGRSPRRRTPSPRRRRSQSPRRRRSQSRESQC). The segment covering 178-205 (VRRRGRSPRRRTPSPRRRRSQSPRRRRS) has biased composition (basic residues). Residues 184–190 (SPRRRTP) form a 1; half-length repeat. The 3 X 8 AA repeats of S-P-R-R-R-R-S-Q stretch occupies residues 184–206 (SPRRRTPSPRRRRSQSPRRRRSQ). A propeptide spanning residues 184-212 (SPRRRTPSPRRRRSQSPRRRRSQSRESQC) is cleaved from the precursor. 2 tandem repeats follow at residues 191 to 198 (SPRRRRSQ) and 199 to 206 (SPRRRRSQ).

The protein belongs to the orthohepadnavirus precore antigen family. As to quaternary structure, homodimerizes. Phosphorylated. In terms of processing, cleaved by host furin.

It localises to the secreted. The protein resides in the host nucleus. Functionally, may regulate immune response to the intracellular capsid in acting as a T-cell tolerogen, by having an immunoregulatory effect which prevents destruction of infected cells by cytotoxic T-cells. This immune regulation may predispose to chronicity during perinatal infections and prevent severe liver injury during adult infections. This Homo sapiens (Human) protein is External core antigen.